Here is a 232-residue protein sequence, read N- to C-terminus: Ribonuclease 3 (232 aa).

An RNase III domain is found at 7–135 (IQAVESKLKF…ILGAVYLDGG (129 aa)). Residue glutamate 48 participates in Mg(2+) binding. Aspartate 52 is a catalytic residue. Mg(2+)-binding residues include asparagine 121 and glutamate 124. Residue glutamate 124 is part of the active site. The DRBM domain maps to 160-229 (NPKNRLQQFT…AKQALSTHDD (70 aa)).

Belongs to the ribonuclease III family. As to quaternary structure, homodimer. Requires Mg(2+) as cofactor.

It is found in the cytoplasm. It carries out the reaction Endonucleolytic cleavage to 5'-phosphomonoester.. In terms of biological role, digests double-stranded RNA. Involved in the processing of primary rRNA transcript to yield the immediate precursors to the large and small rRNAs (23S and 16S). Processes some mRNAs, and tRNAs when they are encoded in the rRNA operon. Processes pre-crRNA and tracrRNA of type II CRISPR loci if present in the organism. This Chlamydia muridarum (strain MoPn / Nigg) protein is Ribonuclease 3.